The chain runs to 511 residues: D-alanine--D-alanyl carrier protein ligase (511 aa).

152-153 provides a ligand contact to ATP; that stretch reads TS. A D-alanine-binding site is contributed by Asp199. ATP is bound at residue 294–299; it reads NAYGPT. Residue Val303 coordinates D-alanine. Residues Asp385, 397 to 400, and Lys499 each bind ATP; that span reads YGGR. Lys499 is a binding site for D-alanine.

Belongs to the ATP-dependent AMP-binding enzyme family. DltA subfamily.

It is found in the cytoplasm. The catalysed reaction is holo-[D-alanyl-carrier protein] + D-alanine + ATP = D-alanyl-[D-alanyl-carrier protein] + AMP + diphosphate. Its pathway is cell wall biogenesis; lipoteichoic acid biosynthesis. Functionally, catalyzes the first step in the D-alanylation of lipoteichoic acid (LTA), the activation of D-alanine and its transfer onto the D-alanyl carrier protein (Dcp) DltC. In an ATP-dependent two-step reaction, forms a high energy D-alanyl-AMP intermediate, followed by transfer of the D-alanyl residue as a thiol ester to the phosphopantheinyl prosthetic group of the Dcp. D-alanylation of LTA plays an important role in modulating the properties of the cell wall in Gram-positive bacteria, influencing the net charge of the cell wall. This is D-alanine--D-alanyl carrier protein ligase from Streptococcus agalactiae serotype V (strain ATCC BAA-611 / 2603 V/R).